Consider the following 570-residue polypeptide: NADPH oxidase 2 (570 aa).

Residues 2-9 (GNWAVNEG) are Cytoplasmic-facing. The helical transmembrane segment at 10–36 (LSIFVILVWLGLNVFLFVWYYRVYDIP) threads the bilayer. The Extracellular portion of the chain corresponds to 37–46 (PKFFYTRKLL). The helical transmembrane segment at 47 to 72 (GSALALARAPAACLNFNCMLILLPVC) threads the bilayer. The 233-residue stretch at 54–286 (RAPAACLNFN…MFLYLCERLV (233 aa)) folds into the Ferric oxidoreductase domain. Residues 73–95 (RNLLSFLRGSSACCSTRVRRQLD) lie on the Cytoplasmic side of the membrane. A helical membrane pass occupies residues 96–130 (RNLTFHKMVAWMIALHSAIHTIAHLFNVEWCVNAR). Residues histidine 101 and histidine 115 each contribute to the heme b site. The Extracellular segment spans residues 131–163 (VNNSDPYSVALSELGDRQNESYLNFARKRIKNP). Residues asparagine 132 and asparagine 149 are each glycosylated (N-linked (GlcNAc...) asparagine). Residue lysine 161 forms a Glycyl lysine isopeptide (Lys-Gly) (interchain with G-Cter in ubiquitin) linkage. The helical transmembrane segment at 164-194 (EGGLYLAVTLLAGITGVVITLCLILIITSST) threads the bilayer. The Cytoplasmic portion of the chain corresponds to 195 to 203 (KTIRRSYFE). FAD is bound by residues arginine 199 and serine 200. A helical membrane pass occupies residues 204 to 222 (VFWYTHHLFVIFFIGLAIH). Heme b is bound by residues tryptophan 206, histidine 209, histidine 222, arginine 226, and isoleucine 227. At 223–267 (GAERIVRGQTAESLAVHNITVCEQKISEWGKIKECPIPQFAGNPP) the chain is on the extracellular side. The N-linked (GlcNAc...) asparagine glycan is linked to asparagine 240. Lysine 255 participates in a covalent cross-link: Glycyl lysine isopeptide (Lys-Gly) (interchain with G-Cter in ubiquitin). Residues methionine 268, tyrosine 280, and arginine 287 each coordinate heme b. A helical transmembrane segment spans residues 268–285 (MTWKWIVGPMFLYLCERL). The Cytoplasmic portion of the chain corresponds to 286–570 (VRFWRSQQKV…VHFIFNKENF (285 aa)). An FAD-binding FR-type domain is found at 287–397 (RFWRSQQKVV…DGPFGTASED (111 aa)). Residues lysine 294, lysine 299, lysine 306, lysine 328, and lysine 334 each participate in a glycyl lysine isopeptide (Lys-Gly) (interchain with G-Cter in ubiquitin) cross-link. 8 residues coordinate FAD: tryptophan 337, histidine 338, proline 339, threonine 341, histidine 354, arginine 356, tryptophan 361, and threonine 362. Lysine 381 is covalently cross-linked (Glycyl lysine isopeptide (Lys-Gly) (interchain with G-Cter in ubiquitin)). Isoleucine 411, arginine 446, and threonine 481 together coordinate NADPH. Lysine 506 participates in a covalent cross-link: Glycyl lysine isopeptide (Lys-Gly) (interchain with G-Cter in ubiquitin). Arginine 513 serves as a coordination point for NADPH. Residue lysine 567 forms a Glycyl lysine isopeptide (Lys-Gly) (interchain with G-Cter in ubiquitin) linkage.

As to quaternary structure, component of the phagocyte NADPH oxidase core complex/cytochrome b558 complex, composed of CYBB (heavy chain (beta)) and CYBA (light chain (alpha)). Component of the phagocyte NADPH oxidase complex composed of an obligatory core heterodimer formed by the membrane proteins CYBA and CYBB and the cytosolic regulatory subunits NCF1/p47-phox, NCF2/p67-phox, NCF4/p40-phox and the small GTPase RAC1 or RAC2. Interacts with NCF1 (phosphorylated form). Interacts with NCF2; the interaction is enhanced in the presence of GBP7. Interacts with RAC2. Interacts with RAC1. Interacts with calprotectin (S100A8/9). Interacts with NRROS; the interaction is direct and impairs formation of a stable NADPH oxidase complex. Interacts with CYBC1; CYBC1 may act as a chaperone stabilizing Cytochrome b-245 heterodimer. The CYBA-CYBB complex interacts with GBP7. Requires FAD as cofactor. Post-translationally, glycosylated. Phosphorylated on Ser and Thr residues by PKC during neutrophils activation. Phosphorylation enhances the NADPH oxidase activity and stimulates its interaction with RAC2, NCF2/p67-phox, and NCF1/p47-phox. In terms of processing, undergoes 'Lys-48'-linked polyubiquitination, likely by RNF145, triggering endoplasmic reticulum-associated degradation. Detected in neutrophils (at protein level).

The protein localises to the cell membrane. The enzyme catalyses NADPH + 2 O2 = 2 superoxide + NADP(+) + H(+). Functionally, catalytic subunit of the phagocyte NADPH oxidase complex that mediates the transfer of electrons from cytosolic NADPH to O2 to produce the superoxide anion (O2(-)). In the activated complex, electrons are first transferred from NADPH to flavin adenine dinucleotide (FAD) and subsequently transferred via two heme molecules to molecular oxygen, producing superoxide through an outer-sphere reaction. Activation of the NADPH oxidase complex is initiated by the assembly of cytosolic subunits of the NADPH oxidase complex with the core NADPH oxidase complex to form a complex at the plasma membrane or phagosomal membrane. This activation process is initiated by phosphorylation dependent binding of the cytosolic NCF1/p47-phox subunit to the C-terminus of CYBA/p22-phox. NADPH oxidase complex assembly is impaired through interaction with NRROS. The protein is NADPH oxidase 2 of Homo sapiens (Human).